The sequence spans 212 residues: Cytidylate kinase (212 aa).

7–15 (GPAASGKGT) contributes to the ATP binding site.

The protein belongs to the cytidylate kinase family. Type 1 subfamily.

Its subcellular location is the cytoplasm. It carries out the reaction CMP + ATP = CDP + ADP. It catalyses the reaction dCMP + ATP = dCDP + ADP. This is Cytidylate kinase from Rhodopseudomonas palustris (strain BisB5).